Reading from the N-terminus, the 185-residue chain is Peptidyl-tRNA hydrolase (185 aa).

Position 14 (Tyr14) interacts with tRNA. His19 functions as the Proton acceptor in the catalytic mechanism. Tyr65, Asn67, and Asn113 together coordinate tRNA.

Belongs to the PTH family. As to quaternary structure, monomer.

The protein localises to the cytoplasm. The enzyme catalyses an N-acyl-L-alpha-aminoacyl-tRNA + H2O = an N-acyl-L-amino acid + a tRNA + H(+). Functionally, hydrolyzes ribosome-free peptidyl-tRNAs (with 1 or more amino acids incorporated), which drop off the ribosome during protein synthesis, or as a result of ribosome stalling. Catalyzes the release of premature peptidyl moieties from peptidyl-tRNA molecules trapped in stalled 50S ribosomal subunits, and thus maintains levels of free tRNAs and 50S ribosomes. In Rickettsia felis (strain ATCC VR-1525 / URRWXCal2) (Rickettsia azadi), this protein is Peptidyl-tRNA hydrolase.